We begin with the raw amino-acid sequence, 173 residues long: C-phycocyanin beta subunit (173 aa).

Position 73 is an N4-methylasparagine (N73). The (2R,3E)-phycocyanobilin site is built by C83 and C154.

It belongs to the phycobiliprotein family. As to quaternary structure, heterodimer of an alpha and a beta subunit. Heterodimers further assemble into trimers and the trimers into hexamers. Contains two covalently linked bilin chromophores.

The protein resides in the cellular thylakoid membrane. Light-harvesting photosynthetic bile pigment-protein from the phycobiliprotein complex (phycobilisome, PBS). Phycocyanin is the major phycobiliprotein in the PBS rod. In Mastigocladus laminosus (Fischerella sp.), this protein is C-phycocyanin beta subunit (cpcB).